The following is a 647-amino-acid chain: DNA mismatch repair protein MutL (647 aa).

The disordered stretch occupies residues 346–378 (QTVHAPRSAAPRVSERASDEPPAWQPSPTSGEP).

This sequence belongs to the DNA mismatch repair MutL/HexB family.

Its function is as follows. This protein is involved in the repair of mismatches in DNA. It is required for dam-dependent methyl-directed DNA mismatch repair. May act as a 'molecular matchmaker', a protein that promotes the formation of a stable complex between two or more DNA-binding proteins in an ATP-dependent manner without itself being part of a final effector complex. The chain is DNA mismatch repair protein MutL from Limosilactobacillus fermentum (strain NBRC 3956 / LMG 18251) (Lactobacillus fermentum).